A 381-amino-acid polypeptide reads, in one-letter code: Probable peptidoglycan glycosyltransferase FtsW (381 aa).

Transmembrane regions (helical) follow at residues leucine 16–alanine 36, leucine 56–leucine 76, tryptophan 80–isoleucine 100, leucine 145–leucine 165, proline 168–glycine 188, leucine 191–histidine 211, valine 274–leucine 294, phenylalanine 312–valine 332, and leucine 343–leucine 363.

It belongs to the SEDS family. FtsW subfamily.

It localises to the cell inner membrane. The catalysed reaction is [GlcNAc-(1-&gt;4)-Mur2Ac(oyl-L-Ala-gamma-D-Glu-L-Lys-D-Ala-D-Ala)](n)-di-trans,octa-cis-undecaprenyl diphosphate + beta-D-GlcNAc-(1-&gt;4)-Mur2Ac(oyl-L-Ala-gamma-D-Glu-L-Lys-D-Ala-D-Ala)-di-trans,octa-cis-undecaprenyl diphosphate = [GlcNAc-(1-&gt;4)-Mur2Ac(oyl-L-Ala-gamma-D-Glu-L-Lys-D-Ala-D-Ala)](n+1)-di-trans,octa-cis-undecaprenyl diphosphate + di-trans,octa-cis-undecaprenyl diphosphate + H(+). It participates in cell wall biogenesis; peptidoglycan biosynthesis. Peptidoglycan polymerase that is essential for cell division. The protein is Probable peptidoglycan glycosyltransferase FtsW of Trichlorobacter lovleyi (strain ATCC BAA-1151 / DSM 17278 / SZ) (Geobacter lovleyi).